The primary structure comprises 408 residues: Imidazolonepropionase (408 aa).

Fe(3+) is bound by residues His73 and His75. 2 residues coordinate Zn(2+): His73 and His75. 4-imidazolone-5-propanoate contacts are provided by Arg82, Tyr145, and His178. Tyr145 is an N-formimidoyl-L-glutamate binding site. His243 contributes to the Fe(3+) binding site. His243 is a Zn(2+) binding site. Gln246 is a 4-imidazolone-5-propanoate binding site. Residue Asp318 participates in Fe(3+) binding. Position 318 (Asp318) interacts with Zn(2+). N-formimidoyl-L-glutamate-binding residues include Asn320 and Gly322. Residue Ser323 coordinates 4-imidazolone-5-propanoate.

The protein belongs to the metallo-dependent hydrolases superfamily. HutI family. Zn(2+) is required as a cofactor. Requires Fe(3+) as cofactor.

The protein resides in the cytoplasm. It carries out the reaction 4-imidazolone-5-propanoate + H2O = N-formimidoyl-L-glutamate. The protein operates within amino-acid degradation; L-histidine degradation into L-glutamate; N-formimidoyl-L-glutamate from L-histidine: step 3/3. In terms of biological role, catalyzes the hydrolytic cleavage of the carbon-nitrogen bond in imidazolone-5-propanoate to yield N-formimidoyl-L-glutamate. It is the third step in the universal histidine degradation pathway. This is Imidazolonepropionase from Shewanella baltica (strain OS195).